A 210-amino-acid chain; its full sequence is Large ribosomal subunit protein uL3 (210 aa).

It belongs to the universal ribosomal protein uL3 family. As to quaternary structure, part of the 50S ribosomal subunit. Forms a cluster with proteins L14 and L19.

One of the primary rRNA binding proteins, it binds directly near the 3'-end of the 23S rRNA, where it nucleates assembly of the 50S subunit. The protein is Large ribosomal subunit protein uL3 of Solibacter usitatus (strain Ellin6076).